The primary structure comprises 97 residues: uncharacterized protein (97 aa).

Positions 1–21 (MLLHGLGRMNIIFICFPSLAC) are cleaved as a signal peptide.

This is an uncharacterized protein from Schizosaccharomyces pombe (strain 972 / ATCC 24843) (Fission yeast).